Reading from the N-terminus, the 332-residue chain is Adenosine receptor A2b (332 aa).

The Extracellular segment spans residues 1–8 (MQLETQDA). A helical membrane pass occupies residues 9 to 33 (LYVALELVIAALAVAGNVLVCAAVG). At 34–43 (ASSALQTPTN) the chain is on the cytoplasmic side. A helical transmembrane segment spans residues 44-67 (YFLVSLATADVAVGLFAIPFAITI). At 68 to 78 (SLGFCTDFHSC) the chain is on the extracellular side. Cys-78 and Cys-171 are oxidised to a cystine. The chain crosses the membrane as a helical span at residues 79 to 101 (LFLACFVLVLTQSSIFSLLAVAV). Residues 102-121 (DRYLAIRVPLRYKGLVTGTR) are Cytoplasmic-facing. A helical transmembrane segment spans residues 122-144 (ARGIIAVLWVLAFGIGLTPFLGW). Residues 145–178 (NSKDRATSNCTEPGDGITNKSCCPVKCLFENVVP) are Extracellular-facing. N-linked (GlcNAc...) asparagine glycosylation is found at Asn-153 and Asn-163. Glu-174 is a binding site for adenosine. The chain crosses the membrane as a helical span at residues 179–203 (MSYMVYFNFFGCVLPPLLIMMVIYI). Residues 204-235 (KIFMVACKQLQHMELMEHSRTTLQREIHAAKS) lie on the Cytoplasmic side of the membrane. Residues 236–259 (LAMIVGIFALCWLPVHAINCITLF) form a helical membrane-spanning segment. Adenosine is bound at residue Asn-254. The Extracellular portion of the chain corresponds to 260–267 (HPALAKDK). Residues 268–291 (PKWVMNVAILLSHANSVVNPIVYA) form a helical membrane-spanning segment. Residues Ser-279 and His-280 each contribute to the adenosine site. At 292–332 (YRNRDFRYSFHRIISRYVLCQTDTKGGSGQAGGQSTFSLSL) the chain is on the cytoplasmic side. Cys-311 carries the S-palmitoyl cysteine lipid modification.

It belongs to the G-protein coupled receptor 1 family.

Its subcellular location is the cell membrane. Receptor for adenosine. The activity of this receptor is mediated by G proteins which activate adenylyl cyclase. The polypeptide is Adenosine receptor A2b (Adora2b) (Rattus norvegicus (Rat)).